The following is a 289-amino-acid chain: ATP synthase gamma chain (289 aa).

The protein belongs to the ATPase gamma chain family. In terms of assembly, F-type ATPases have 2 components, CF(1) - the catalytic core - and CF(0) - the membrane proton channel. CF(1) has five subunits: alpha(3), beta(3), gamma(1), delta(1), epsilon(1). CF(0) has three main subunits: a, b and c.

It is found in the cell inner membrane. Produces ATP from ADP in the presence of a proton gradient across the membrane. The gamma chain is believed to be important in regulating ATPase activity and the flow of protons through the CF(0) complex. The sequence is that of ATP synthase gamma chain from Erwinia tasmaniensis (strain DSM 17950 / CFBP 7177 / CIP 109463 / NCPPB 4357 / Et1/99).